A 309-amino-acid chain; its full sequence is Methionyl-tRNA formyltransferase (309 aa).

109 to 112 (SLLP) serves as a coordination point for (6S)-5,6,7,8-tetrahydrofolate.

It belongs to the Fmt family.

It carries out the reaction L-methionyl-tRNA(fMet) + (6R)-10-formyltetrahydrofolate = N-formyl-L-methionyl-tRNA(fMet) + (6S)-5,6,7,8-tetrahydrofolate + H(+). Its function is as follows. Attaches a formyl group to the free amino group of methionyl-tRNA(fMet). The formyl group appears to play a dual role in the initiator identity of N-formylmethionyl-tRNA by promoting its recognition by IF2 and preventing the misappropriation of this tRNA by the elongation apparatus. In Thiobacillus denitrificans (strain ATCC 25259 / T1), this protein is Methionyl-tRNA formyltransferase.